Reading from the N-terminus, the 196-residue chain is Large ribosomal subunit protein bL20 (196 aa).

The protein belongs to the bacterial ribosomal protein bL20 family.

Its function is as follows. Binds directly to 23S ribosomal RNA and is necessary for the in vitro assembly process of the 50S ribosomal subunit. It is not involved in the protein synthesizing functions of that subunit. In Oenococcus oeni (strain ATCC BAA-331 / PSU-1), this protein is Large ribosomal subunit protein bL20 (rplT).